Here is an 846-residue protein sequence, read N- to C-terminus: Matrin-3 (846 aa).

Residue Ser2 is modified to N-acetylserine. Residue Lys3 is modified to N6-acetyllysine; alternate. Lys3 is covalently cross-linked (Glycyl lysine isopeptide (Lys-Gly) (interchain with G-Cter in SUMO2); alternate). Ser4, Ser9, Ser14, Ser22, Ser41, Ser118, and Ser126 each carry phosphoserine. Residues Lys132 and Lys146 each participate in a glycyl lysine isopeptide (Lys-Gly) (interchain with G-Cter in SUMO2) cross-link. 2 disordered regions span residues 147–174 and 187–213; these read RRRTEEGPTLSYGRDGRSATREPPYRVP and DSFDDRGPSLNPVLDYDHGSRSQESGY. The residue at position 150 (Thr150) is a Phosphothreonine. Ser157 is modified (phosphoserine). Tyr158 is subject to Phosphotyrosine. A compositionally biased stretch (basic and acidic residues) spans 160–174; the sequence is RDGRSATREPPYRVP. Phosphoserine occurs at positions 164, 188, and 195. Basic and acidic residues predominate over residues 201-213; that stretch reads DYDHGSRSQESGY. Tyr202 carries the phosphotyrosine modification. Phosphoserine occurs at positions 206, 208, and 211. Residue Tyr219 is modified to Phosphotyrosine. At Ser234 the chain carries Phosphoserine. Lys245 participates in a covalent cross-link: Glycyl lysine isopeptide (Lys-Gly) (interchain with G-Cter in SUMO2). Phosphoserine is present on Ser264. A Glycyl lysine isopeptide (Lys-Gly) (interchain with G-Cter in SUMO2) cross-link involves residue Lys269. A Phosphoserine modification is found at Ser275. Residues 342–394 form a disordered region; it reads PFMLQQSTNPAPGILGPPPPSFHLGGPAVGPRGNLGAGNGNLQGPRHMQKGRV. The 76-residue stretch at 398–473 folds into the RRM 1 domain; the sequence is RVVHIMDFQR…KPVRVHLSQK (76 aa). Glycyl lysine isopeptide (Lys-Gly) (interchain with G-Cter in SUMO2) cross-links involve residues Lys478, Lys487, and Lys491. In terms of domain architecture, RRM 2 spans 496-571; the sequence is RVIHLSNLPH…RCVKVDLSEK (76 aa). A phosphoserine mark is found at Ser509 and Ser511. Lys515 is covalently cross-linked (Glycyl lysine isopeptide (Lys-Gly) (interchain with G-Cter in SUMO2)). An N6-acetyllysine; alternate modification is found at Lys522. Residue Lys522 forms a Glycyl lysine isopeptide (Lys-Gly) (interchain with G-Cter in SUMO2); alternate linkage. Ser533 is subject to Phosphoserine. Residues Lys554 and Lys555 each participate in a glycyl lysine isopeptide (Lys-Gly) (interchain with G-Cter in SUMO2) cross-link. Lys571 is modified (N6-acetyllysine). The disordered stretch occupies residues 588–779; sequence KKDKSRKRSY…EDYTIPDEYR (192 aa). A phosphoserine mark is found at Ser596, Ser598, Ser604, and Ser606. The span at 600 to 642 shows a compositional bias: basic and acidic residues; sequence DGKESPSDKKSKTDAQKTESPAEGKEQEEKSGEDGEKDTKDDQ. Residues Lys616 and Lys629 each participate in a glycyl lysine isopeptide (Lys-Gly) (interchain with G-Cter in SUMO2) cross-link. A compositionally biased stretch (acidic residues) spans 652-664; sequence ESEDELLVDEEEA. Ser653, Ser670, Ser672, and Ser673 each carry phosphoserine. Over residues 665–675 the composition is skewed to low complexity; that stretch reads AALLESGSSVG. Phosphothreonine is present on Thr678. Ser688 is subject to Phosphoserine. Over residues 688–703 the composition is skewed to basic and acidic residues; it reads SDGKKEPSDKAVKKDP. The Nuclear localization signal signature appears at 709-717; it reads SKKKLKKVD. Residues Lys718 and Lys735 each participate in a glycyl lysine isopeptide (Lys-Gly) (interchain with G-Cter in SUMO2) cross-link. Thr740 carries the phosphothreonine modification. A phosphoserine mark is found at Ser746 and Ser758. Residues 766–779 show a composition bias toward basic and acidic residues; that stretch reads DENKEDYTIPDEYR. Residue Lys769 forms a Glycyl lysine isopeptide (Lys-Gly) (interchain with G-Cter in SUMO2) linkage. A Matrin-type zinc finger spans residues 800–831; it reads FYCKLCSLFYTNEEVAKNTHCSSLPHYQKLKK. Lys835 bears the N6-acetyllysine; alternate mark. Lys835 is covalently cross-linked (Glycyl lysine isopeptide (Lys-Gly) (interchain with G-Cter in SUMO2); alternate).

In terms of assembly, part of a complex consisting of SFPQ, NONO and MATR3. Interacts with AGO1 and AGO2. Part of a complex composed at least of ASH2L, EMSY, HCFC1, HSPA8, CCAR2, MATR3, MKI67, RBBP5, TUBB2A, WDR5 and ZNF335; this complex may have a histone H3-specific methyltransferase activity. Interacts with TARDBP. Part of the HDP-RNP complex composed of at least HEXIM1, PRKDC, XRCC5, XRCC6, paraspeckle proteins (SFPQ, NONO, PSPC1, RBM14, and MATR3) and NEAT1 RNA. Interacts with FUS. Interacts with IGF2BP1. Interacts with IGF2BP2 and IGF2BP3. Interacts with RBPMS.

The protein localises to the nucleus matrix. May play a role in transcription or may interact with other nuclear matrix proteins to form the internal fibrogranular network. In association with the SFPQ-NONO heteromer may play a role in nuclear retention of defective RNAs. Plays a role in the regulation of DNA virus-mediated innate immune response by assembling into the HDP-RNP complex, a complex that serves as a platform for IRF3 phosphorylation and subsequent innate immune response activation through the cGAS-STING pathway. Binds to N6-methyladenosine (m6A)-containing mRNAs and contributes to MYC stability by binding to m6A-containing MYC mRNAs. May bind to specific miRNA hairpins. The polypeptide is Matrin-3 (Matr3) (Mus musculus (Mouse)).